The primary structure comprises 757 residues: Large ribosomal subunit protein mL102 (rPPR5) (757 aa).

The span at 39–55 (EETQTPANANPETQSPD) shows a compositional bias: polar residues. The disordered stretch occupies residues 39-82 (EETQTPANANPETQSPDAKSETKKNLTSTETRPLRERFQRGKRQ). Positions 70 to 82 (RPLRERFQRGKRQ) are enriched in basic and acidic residues. 16 PPR repeats span residues 149–183 (DRDT…GVPW), 184–218 (DEDM…GVER), 219–253 (TIKS…GVEP), 254–288 (TRHT…GISP), 289–323 (DDAT…KIGP), 324–358 (SVVS…GIEP), 359–393 (NATT…HIAP), 395–429 (DNSI…NVPA), 430–464 (EAGH…EIIL), 473–507 (EPSA…GVQD), 510–541 (ALNN…GVPR), 542–576 (ESNA…GHVP), 577–611 (DSSL…NVGI), 614–648 (NMDL…GHTA), 651–680 (DSLL…DLSL), and 681–715 (EFSS…GSST).

Belongs to the PPR family. P subfamily. In terms of assembly, component of the mitochondrial ribosome large subunit.

It localises to the mitochondrion. The chain is Large ribosomal subunit protein mL102 (rPPR5) from Arabidopsis thaliana (Mouse-ear cress).